The sequence spans 429 residues: MDRIHITGGTPLNGTIPISGAKNAALPLMIASLLTGETLELINVPRLADIAALTRILGNHGVDHMVVGKRPGQTAETGQTVRLTASNVIDTTAPYELVSTMRASFWVIAPLLARFGEAKVSLPGGCAIGTRPVDLLLMALEKLGAEIEIDGGYVVAKTKNGLRGTEIDFPKVTVGGTHVALMAAALAYGTTVLDNAAREPEVVDLAECLIKMGARIEGAGTSRIVVEGVARLGGTRHEVLPDRIETGTYAMAVAMTGGDVSLVNTRTDLLASALETLASTGTEVTALPDGIRVRRNGGGISPADVTTDPFPGFPTDLQAQFMALMTLAKGQSRIRETIFENRFMHVQELARLGARIRLDGDLAVVEGVERLKGAPVMATDLRASVSLVIGALAAEGETQINRVYHLDRGFEALEAKLARCGAQIERVRA.

Residue 22-23 (KN) participates in phosphoenolpyruvate binding. Arginine 102 is a UDP-N-acetyl-alpha-D-glucosamine binding site. The Proton donor role is filled by cysteine 126. Cysteine 126 is modified (2-(S-cysteinyl)pyruvic acid O-phosphothioketal). Residues 131 to 135 (RPVDL), aspartate 316, and isoleucine 338 contribute to the UDP-N-acetyl-alpha-D-glucosamine site.

The protein belongs to the EPSP synthase family. MurA subfamily.

It is found in the cytoplasm. It catalyses the reaction phosphoenolpyruvate + UDP-N-acetyl-alpha-D-glucosamine = UDP-N-acetyl-3-O-(1-carboxyvinyl)-alpha-D-glucosamine + phosphate. It functions in the pathway cell wall biogenesis; peptidoglycan biosynthesis. Functionally, cell wall formation. Adds enolpyruvyl to UDP-N-acetylglucosamine. The sequence is that of UDP-N-acetylglucosamine 1-carboxyvinyltransferase from Methylorubrum extorquens (strain CM4 / NCIMB 13688) (Methylobacterium extorquens).